The sequence spans 121 residues: Large ribosomal subunit protein bL12 (121 aa).

Belongs to the bacterial ribosomal protein bL12 family. Homodimer. Part of the ribosomal stalk of the 50S ribosomal subunit. Forms a multimeric L10(L12)X complex, where L10 forms an elongated spine to which 2 to 4 L12 dimers bind in a sequential fashion. Binds GTP-bound translation factors.

Its function is as follows. Forms part of the ribosomal stalk which helps the ribosome interact with GTP-bound translation factors. Is thus essential for accurate translation. This is Large ribosomal subunit protein bL12 from Anoxybacillus flavithermus (strain DSM 21510 / WK1).